Reading from the N-terminus, the 1404-residue chain is ABC transporter G family member 47 (1404 aa).

The 268-residue stretch at 156–423 folds into the ABC transporter 1 domain; the sequence is GNALHITRKK…FQSIGFKCPE (268 aa). 189-196 lines the ATP pocket; the sequence is GPPGSGKT. The 214-residue stretch at 501-714 folds into the ABC transmembrane type-2 1 domain; sequence ELLQANIDRE…ALNTLAVNEF (214 aa). The next 7 helical transmembrane spans lie at 519–539, 565–585, 607–627, 638–658, 663–683, 692–712, and 751–771; these read FLYIFQAIRLTVMAINTMTVF, MIMFNGLAEMGLAIAKLPVFF, TPISFLNTIVWVFLTYYVIGF, FLALFVMSEATSGLFRFIASL, VVASTMGSSCILISMLSSGFI, WWIWGYWISPLMYALNTLAVN, and VGALLGYVILLNVLYTICLIF. The region spanning 808–1059 is the ABC transporter 2 domain; it reads ITFEDIKYSI…ELIRYFEAIE (252 aa). 852–859 lines the ATP pocket; it reads GVSGAGKT. The ABC transmembrane type-2 2 domain occupies 1132 to 1346; that stretch reads TQCLACLWKQ…TLNGLVTSQF (215 aa). The next 7 helical transmembrane spans lie at 1152-1172, 1183-1199, 1239-1259, 1266-1286, 1298-1318, 1321-1341, and 1373-1393; these read IAVKYFFTIIVALLFGTMFWG, LFSAMGSMYSTCLTMGV, LPYIFLQTIIYGMLVYAMIGY, FFWYLFFMYFTLSYYTFYGMM, TVVSTGFYTMWNLFSGFLIPL, IPIWWRWYYWICPVAWTLNGL, and LLWVPAMVVVSFAVLFAFLFG.

Belongs to the ABC transporter superfamily. ABCG family. PDR (TC 3.A.1.205) subfamily.

Its subcellular location is the membrane. In terms of biological role, may be a general defense protein. In Oryza sativa subsp. japonica (Rice), this protein is ABC transporter G family member 47.